We begin with the raw amino-acid sequence, 274 residues long: Large ribosomal subunit protein uL2 (274 aa).

2 disordered regions span residues 34–54 (LEKK…TRHI) and 224–261 (VAMN…KTRA).

Belongs to the universal ribosomal protein uL2 family. In terms of assembly, part of the 50S ribosomal subunit. Forms a bridge to the 30S subunit in the 70S ribosome.

Its function is as follows. One of the primary rRNA binding proteins. Required for association of the 30S and 50S subunits to form the 70S ribosome, for tRNA binding and peptide bond formation. It has been suggested to have peptidyltransferase activity; this is somewhat controversial. Makes several contacts with the 16S rRNA in the 70S ribosome. This is Large ribosomal subunit protein uL2 from Ectopseudomonas mendocina (strain ymp) (Pseudomonas mendocina).